The following is a 44-amino-acid chain: Small ribosomal subunit protein eS31 (44 aa).

Residues Cys18, Cys21, Cys35, and Cys38 each coordinate Zn(2+). The C4-type zinc-finger motif lies at 18–38 (CPRCGDTVLAEHEDRQHCGKC).

Belongs to the eukaryotic ribosomal protein eS31 family. In terms of assembly, part of the 30S ribosomal subunit. The cofactor is Zn(2+).

This is Small ribosomal subunit protein eS31 from Haloarcula marismortui (strain ATCC 43049 / DSM 3752 / JCM 8966 / VKM B-1809) (Halobacterium marismortui).